The sequence spans 268 residues: Probable intron-encoded DNA endonuclease 1 (268 aa).

This sequence belongs to the LAGLIDADG endonuclease family.

It localises to the mitochondrion. Mitochondrial DNA endonuclease involved in intron homing. This chain is Probable intron-encoded DNA endonuclease 1 (hegI1), found in Mycosarcoma maydis (Corn smut fungus).